A 219-amino-acid polypeptide reads, in one-letter code: MTKGILGRKIGMTQVFGENGDLIPVTVVEASQNVILQKKSEEIDGYNAIQVGYEDKQAYKKDSRSSKYANKPAEGHAKKAGTAPKRFIREFRNVNVDEYEVGQEVSVNTFEAGDVIDVTGVSKGKGFQGAIKRHNQARGPMSHGSHFHRAPGSVGMASDASRVFKGQKMPGRMGGNTVTVQNLEVVQIDAENNVILVKGNVPGPKKGFVEITSSIKGNK.

Disordered stretches follow at residues 62–81 (DSRS…KKAG) and 136–156 (QARG…SVGM).

It belongs to the universal ribosomal protein uL3 family. Part of the 50S ribosomal subunit. Forms a cluster with proteins L14 and L19.

In terms of biological role, one of the primary rRNA binding proteins, it binds directly near the 3'-end of the 23S rRNA, where it nucleates assembly of the 50S subunit. The protein is Large ribosomal subunit protein uL3 of Staphylococcus saprophyticus subsp. saprophyticus (strain ATCC 15305 / DSM 20229 / NCIMB 8711 / NCTC 7292 / S-41).